Here is a 256-residue protein sequence, read N- to C-terminus: Protein YABBY 4 (256 aa).

The C4-type zinc-finger motif lies at 30–57 (CNCCDTILAVGVPCSSLFKTVTVRCGHC). The interval 127-168 (SCASNAPAMQMPPAKPVQQEPELPKNAPASANRPPEKRQRVP) is disordered.

Belongs to the YABBY family. As to expression, preferentially expressed in immature organs containing meristems and organ primordia. Expressed in phloem of developing vascular tissues of young seedling shoots. Expressed in the phloem of midvein vasculature of young leaves. Does not show polar expression pattern in leaf primordia.

It is found in the nucleus. Its function is as follows. Seems to be associated with phloem cell differentiation. This Oryza sativa subsp. japonica (Rice) protein is Protein YABBY 4 (YAB4).